The following is a 185-amino-acid chain: Ribosome-recycling factor (185 aa).

Belongs to the RRF family.

Its subcellular location is the cytoplasm. Responsible for the release of ribosomes from messenger RNA at the termination of protein biosynthesis. May increase the efficiency of translation by recycling ribosomes from one round of translation to another. This Shewanella amazonensis (strain ATCC BAA-1098 / SB2B) protein is Ribosome-recycling factor.